Reading from the N-terminus, the 445-residue chain is Tubulin beta-5 chain (445 aa).

Residues Q11, E69, S138, G142, T143, G144, N204, and N226 each contribute to the GTP site. Residue E69 coordinates Mg(2+). The interval 420–445 (AEYQQYQDATADDEYEEGEEEEEEAA) is disordered. The span at 429–445 (TADDEYEEGEEEEEEAA) shows a compositional bias: acidic residues.

This sequence belongs to the tubulin family. In terms of assembly, dimer of alpha and beta chains. A typical microtubule is a hollow water-filled tube with an outer diameter of 25 nm and an inner diameter of 15 nM. Alpha-beta heterodimers associate head-to-tail to form protofilaments running lengthwise along the microtubule wall with the beta-tubulin subunit facing the microtubule plus end conferring a structural polarity. Microtubules usually have 13 protofilaments but different protofilament numbers can be found in some organisms and specialized cells. Mg(2+) is required as a cofactor.

The protein localises to the cytoplasm. It localises to the cytoskeleton. Tubulin is the major constituent of microtubules, a cylinder consisting of laterally associated linear protofilaments composed of alpha- and beta-tubulin heterodimers. Microtubules grow by the addition of GTP-tubulin dimers to the microtubule end, where a stabilizing cap forms. Below the cap, tubulin dimers are in GDP-bound state, owing to GTPase activity of alpha-tubulin. This Gossypium hirsutum (Upland cotton) protein is Tubulin beta-5 chain.